We begin with the raw amino-acid sequence, 362 residues long: Chorismate synthase (362 aa).

Arginine 47 is an NADP(+) binding site. FMN is bound by residues 124–126, glycine 286, 301–305, and arginine 327; these read RSS and KPTAT.

Belongs to the chorismate synthase family. Homotetramer. FMNH2 is required as a cofactor.

The catalysed reaction is 5-O-(1-carboxyvinyl)-3-phosphoshikimate = chorismate + phosphate. Its pathway is metabolic intermediate biosynthesis; chorismate biosynthesis; chorismate from D-erythrose 4-phosphate and phosphoenolpyruvate: step 7/7. Functionally, catalyzes the anti-1,4-elimination of the C-3 phosphate and the C-6 proR hydrogen from 5-enolpyruvylshikimate-3-phosphate (EPSP) to yield chorismate, which is the branch point compound that serves as the starting substrate for the three terminal pathways of aromatic amino acid biosynthesis. This reaction introduces a second double bond into the aromatic ring system. This chain is Chorismate synthase, found in Gloeothece citriformis (strain PCC 7424) (Cyanothece sp. (strain PCC 7424)).